Consider the following 1176-residue polypeptide: Histidine kinase 2 (1176 aa).

At 1–29 the chain is on the cytoplasmic side; the sequence is MSITCELLNLTSKKAKKSSSSDKKWLKKP. A helical transmembrane segment spans residues 30–50; the sequence is LFFLILCGSLVIVLVMFLRLG. Residues 51 to 174 are Extracellular-facing; the sequence is RSQKEETDSC…LEQGLSSYLR (124 aa). Residues 175–195 traverse the membrane as a helical segment; that stretch reads NAWWCLILGVLVCHKIYVSHS. Over 196-232 the chain is Cytoplasmic; that stretch reads KARGERKEKVHLQEALAPKKQQQRAQTSSRGAGRWRK. Residues 233-253 traverse the membrane as a helical segment; it reads NILLLGILGGVSFSVWWFWDT. Topologically, residues 254–536 are extracellular; that stretch reads NEEIIMKRRE…CRFKHKLPIP (283 aa). In terms of domain architecture, CHASE spans 302–526; sequence IPSAIDQRTF…GDPSRNHEMH (225 aa). Residues 537–557 form a helical membrane-spanning segment; sequence WTAITPSILVLVITFLVGYIL. The Cytoplasmic portion of the chain corresponds to 558-1176; it reads YEAINRIATV…TAVARFFEPC (619 aa). Residues 594 to 867 enclose the Histidine kinase domain; sequence TVSHEIRTPM…TFSFTGVFGK (274 aa). His-597 is modified (phosphohistidine; by autocatalysis). 2 Response regulatory domains span residues 891-1013 and 1036-1173; these read RALV…QETL and QILV…ARFF. 4-aspartylphosphate occurs at positions 942 and 1086.

Self-interacts. Interacts with AHK3, AHP1, AHP2, AHP3, AHP5, ATAF2, AT2S3, BETAA-AD, CYP20-2, DRP1A, HIR1, HIR2, PI4KB1, PI4KG5 and At4g12060. Post-translationally, autophosphorylated predominantly on His residues. Activation probably requires a transfer of a phosphate group between a His in the transmitter domain and an Asp of the receiver domain. Expressed in roots, leaves and flowers, mostly in the vascular tissues. Present in seedlings.

The protein localises to the endoplasmic reticulum membrane. The catalysed reaction is ATP + protein L-histidine = ADP + protein N-phospho-L-histidine.. Activated by cytokinins to initiate phosphorelay signaling. Cytokinins (CK) receptor related to bacterial two-component regulators. Functions as a histidine kinase and transmits the stress signal to a downstream MAPK cascade. This protein undergoes an ATP-dependent autophosphorylation at a conserved histidine residue in the kinase core, and a phosphoryl group is then transferred to a conserved aspartate residue in the receiver domain. In the presence of cytokinin, feeds phosphate to phosphorelay-integrating histidine phosphotransfer protein (HPt) and activates subsequent cascade. Involved in meristems establishment in seedlings. Redundant negative regulator of drought and salt stress responses and abscisic acid (ABA) signaling. Together with AHK3, plays a negative regulatory role in cold stress signaling via inhibition of ABA response, occurring independently of the cold acclimation pathway. Redundant positive regulator of cytokinin signaling that regulates many developmental processes including seed germination, cell division, seed size, chlorophyll retention during leaf senescence, root repression and shoot promotion. Involved in alkamides (e.g. N-isobutyl decanamide) and N-acylethanolamides (NAE) signaling that control meristematic activity and differentiation processes during plant development. Contributes to vascular bundle formation and secondary growth in a cytokinin-dependent manner, probably by promoting the maintenance of mitotic activity and/or identity of procambial cells. Together with AHK4, required for growth and reproduction promotion stimulated by the endophytic fungus Piriformospora indica in a trans-zeatin-dependent manner. Required by the cytokinin-dependent flower development regulation pathway. The sequence is that of Histidine kinase 2 (AHK2) from Arabidopsis thaliana (Mouse-ear cress).